We begin with the raw amino-acid sequence, 414 residues long: MKINGVKGMNDVLPADVARWHEMEAVAREVFALYGYREVRTPAVEHAALFARGVGEATDIVNKEMYVFEDKGEELLALRPEGTAGTVRAFIEHGAFVEGPQKWFYMGPMFRRERPQKGRYRQFHQIGCEAFGVAEPYLDAEQIALLADYFARLGVTAELKLNSVGDAQCRPAYLADLKAYLVANQGALCADCKDRIERNPLRVLDCKVESCQPVLEQAPRLLERLCEPCRAHFDQVKAGLDALGVAYRVEPRLVRGLDYYVRTAYEFTSDALGSQSAVAGGGRYDRLVETLGGPPTPGIGFALGEERLSMILEKVGRAAPERRPAVFFVSADATGALEALRLAAGLRRAGIACELDPRGGKLKAQFKQAERVGARWAVVLGGNEVATGQAKLKDLQTREETPVALSELAARVSG.

The protein belongs to the class-II aminoacyl-tRNA synthetase family. As to quaternary structure, homodimer.

The protein resides in the cytoplasm. It carries out the reaction tRNA(His) + L-histidine + ATP = L-histidyl-tRNA(His) + AMP + diphosphate + H(+). The chain is Histidine--tRNA ligase from Anaeromyxobacter dehalogenans (strain 2CP-1 / ATCC BAA-258).